A 279-amino-acid chain; its full sequence is Shikimate dehydrogenase (NADP(+)) (279 aa).

Residues 14 to 16 and Thr62 contribute to the shikimate site; that span reads SLS. The active-site Proton acceptor is Lys66. Shikimate-binding residues include Asn87 and Asp103. Residues 127–131, 151–156, and Met215 each bind NADP(+); these read GAGGA and NRTKAK. Tyr217 contributes to the shikimate binding site. Gly239 is a binding site for NADP(+).

The protein belongs to the shikimate dehydrogenase family. As to quaternary structure, homodimer.

It carries out the reaction shikimate + NADP(+) = 3-dehydroshikimate + NADPH + H(+). Its pathway is metabolic intermediate biosynthesis; chorismate biosynthesis; chorismate from D-erythrose 4-phosphate and phosphoenolpyruvate: step 4/7. Its function is as follows. Involved in the biosynthesis of the chorismate, which leads to the biosynthesis of aromatic amino acids. Catalyzes the reversible NADPH linked reduction of 3-dehydroshikimate (DHSA) to yield shikimate (SA). This is Shikimate dehydrogenase (NADP(+)) from Alteromonas mediterranea (strain DSM 17117 / CIP 110805 / LMG 28347 / Deep ecotype).